Here is a 574-residue protein sequence, read N- to C-terminus: Aspartate--tRNA ligase (574 aa).

E172 is an L-aspartate binding site. An aspartate region spans residues Q196 to K199. R218 contributes to the L-aspartate binding site. Residues R218–E220 and Q227 contribute to the ATP site. H453 is an L-aspartate binding site. ATP is bound at residue E487. Residue R494 participates in L-aspartate binding. G539–R542 contacts ATP.

It belongs to the class-II aminoacyl-tRNA synthetase family. Type 1 subfamily. Homodimer.

The protein localises to the cytoplasm. The enzyme catalyses tRNA(Asp) + L-aspartate + ATP = L-aspartyl-tRNA(Asp) + AMP + diphosphate. Its function is as follows. Catalyzes the attachment of L-aspartate to tRNA(Asp) in a two-step reaction: L-aspartate is first activated by ATP to form Asp-AMP and then transferred to the acceptor end of tRNA(Asp). The sequence is that of Aspartate--tRNA ligase from Blochmanniella pennsylvanica (strain BPEN).